Reading from the N-terminus, the 225-residue chain is Ribosomal RNA small subunit methyltransferase G (225 aa).

S-adenosyl-L-methionine-binding positions include G62, 113–114, and K130; that span reads AE.

The protein belongs to the methyltransferase superfamily. RNA methyltransferase RsmG family.

It is found in the cytoplasm. In terms of biological role, specifically methylates the N7 position of a guanine in 16S rRNA. The chain is Ribosomal RNA small subunit methyltransferase G from Petrotoga mobilis (strain DSM 10674 / SJ95).